Reading from the N-terminus, the 268-residue chain is Indole-3-glycerol phosphate synthase (268 aa).

The protein belongs to the TrpC family.

The catalysed reaction is 1-(2-carboxyphenylamino)-1-deoxy-D-ribulose 5-phosphate + H(+) = (1S,2R)-1-C-(indol-3-yl)glycerol 3-phosphate + CO2 + H2O. It functions in the pathway amino-acid biosynthesis; L-tryptophan biosynthesis; L-tryptophan from chorismate: step 4/5. In Acinetobacter baumannii (strain SDF), this protein is Indole-3-glycerol phosphate synthase.